We begin with the raw amino-acid sequence, 317 residues long: Beta-ketoacyl-[acyl-carrier-protein] synthase III (317 aa).

Residues cysteine 112 and histidine 244 contribute to the active site. An ACP-binding region spans residues 245-249 (QANLR). Asparagine 274 is an active-site residue.

It belongs to the thiolase-like superfamily. FabH family. In terms of assembly, homodimer.

The protein localises to the cytoplasm. It carries out the reaction malonyl-[ACP] + acetyl-CoA + H(+) = 3-oxobutanoyl-[ACP] + CO2 + CoA. The protein operates within lipid metabolism; fatty acid biosynthesis. Functionally, catalyzes the condensation reaction of fatty acid synthesis by the addition to an acyl acceptor of two carbons from malonyl-ACP. Catalyzes the first condensation reaction which initiates fatty acid synthesis and may therefore play a role in governing the total rate of fatty acid production. Possesses both acetoacetyl-ACP synthase and acetyl transacylase activities. Its substrate specificity determines the biosynthesis of branched-chain and/or straight-chain of fatty acids. The sequence is that of Beta-ketoacyl-[acyl-carrier-protein] synthase III from Pasteurella multocida (strain Pm70).